A 122-amino-acid chain; its full sequence is Large ribosomal subunit protein uL14 (122 aa).

Belongs to the universal ribosomal protein uL14 family. As to quaternary structure, part of the 50S ribosomal subunit. Forms a cluster with proteins L3 and L19. In the 70S ribosome, L14 and L19 interact and together make contacts with the 16S rRNA in bridges B5 and B8.

In terms of biological role, binds to 23S rRNA. Forms part of two intersubunit bridges in the 70S ribosome. This Kineococcus radiotolerans (strain ATCC BAA-149 / DSM 14245 / SRS30216) protein is Large ribosomal subunit protein uL14.